A 577-amino-acid polypeptide reads, in one-letter code: Eukaryotic translation initiation factor 3 subunit D (577 aa).

The tract at residues 103–177 is disordered; the sequence is DSTKTRFGRG…KDYDKPQRNR (75 aa). A compositionally biased stretch (basic and acidic residues) spans 166–177; sequence GWKDYDKPQRNR. The tract at residues 305-319 is RNA gate; that stretch reads TLDMVTVNENAADAP. Residues 558-577 form a disordered region; it reads GSFEDDGEGDVIEENVEEED. Over residues 560–577 the composition is skewed to acidic residues; it reads FEDDGEGDVIEENVEEED.

The protein belongs to the eIF-3 subunit D family. In terms of assembly, component of the eukaryotic translation initiation factor 3 (eIF-3) complex.

It localises to the cytoplasm. Its function is as follows. mRNA cap-binding component of the eukaryotic translation initiation factor 3 (eIF-3) complex, which is involved in protein synthesis of a specialized repertoire of mRNAs and, together with other initiation factors, stimulates binding of mRNA and methionyl-tRNAi to the 40S ribosome. The eIF-3 complex specifically targets and initiates translation of a subset of mRNAs involved in cell proliferation. In the eIF-3 complex, eif3d specifically recognizes and binds the 7-methylguanosine cap of a subset of mRNAs. The chain is Eukaryotic translation initiation factor 3 subunit D from Sclerotinia sclerotiorum (strain ATCC 18683 / 1980 / Ss-1) (White mold).